An 88-amino-acid chain; its full sequence is Small ribosomal subunit protein uS17 (88 aa).

The protein belongs to the universal ribosomal protein uS17 family. As to quaternary structure, part of the 30S ribosomal subunit.

Its function is as follows. One of the primary rRNA binding proteins, it binds specifically to the 5'-end of 16S ribosomal RNA. The chain is Small ribosomal subunit protein uS17 from Syntrophotalea carbinolica (strain DSM 2380 / NBRC 103641 / GraBd1) (Pelobacter carbinolicus).